The following is a 367-amino-acid chain: Glutamate 5-kinase (367 aa).

K9 contacts ATP. Substrate contacts are provided by S49, D136, and N148. Residues 168 to 169 and 210 to 216 contribute to the ATP site; these read TD and TGGMKSK. One can recognise a PUA domain in the interval 276-350; sequence SGQIEIDAGA…GMQSQQIQAR (75 aa).

This sequence belongs to the glutamate 5-kinase family.

It localises to the cytoplasm. The enzyme catalyses L-glutamate + ATP = L-glutamyl 5-phosphate + ADP. Its pathway is amino-acid biosynthesis; L-proline biosynthesis; L-glutamate 5-semialdehyde from L-glutamate: step 1/2. Its function is as follows. Catalyzes the transfer of a phosphate group to glutamate to form L-glutamate 5-phosphate. The protein is Glutamate 5-kinase of Bacillus anthracis.